The primary structure comprises 163 residues: Phosphopantetheine adenylyltransferase (163 aa).

Residue T11 participates in substrate binding. Residues 11–12 and H19 each bind ATP; that span reads TF. Substrate is bound by residues K43, L75, and R89. Residues 90-92, E100, and 125-131 contribute to the ATP site; these read GLR and YSFISST.

It belongs to the bacterial CoaD family. Homohexamer. It depends on Mg(2+) as a cofactor.

The protein resides in the cytoplasm. It catalyses the reaction (R)-4'-phosphopantetheine + ATP + H(+) = 3'-dephospho-CoA + diphosphate. It functions in the pathway cofactor biosynthesis; coenzyme A biosynthesis; CoA from (R)-pantothenate: step 4/5. In terms of biological role, reversibly transfers an adenylyl group from ATP to 4'-phosphopantetheine, yielding dephospho-CoA (dPCoA) and pyrophosphate. This Acinetobacter baylyi (strain ATCC 33305 / BD413 / ADP1) protein is Phosphopantetheine adenylyltransferase.